The chain runs to 308 residues: Probable manganese-dependent inorganic pyrophosphatase (308 aa).

Positions 9, 13, 15, 75, 97, and 149 each coordinate Mn(2+).

The protein belongs to the PPase class C family. Requires Mn(2+) as cofactor.

It localises to the cytoplasm. The catalysed reaction is diphosphate + H2O = 2 phosphate + H(+). The sequence is that of Probable manganese-dependent inorganic pyrophosphatase from Listeria innocua serovar 6a (strain ATCC BAA-680 / CLIP 11262).